A 58-amino-acid polypeptide reads, in one-letter code: Large ribosomal subunit protein uL30 (58 aa).

It belongs to the universal ribosomal protein uL30 family. Part of the 50S ribosomal subunit.

This is Large ribosomal subunit protein uL30 from Erythrobacter litoralis (strain HTCC2594).